The following is a 626-amino-acid chain: (+)-3-carene synthase 1, chloroplastic (626 aa).

The transit peptide at 1–45 (MSLISAVPLASSCVSKSLISSVREHTALRRAIATLQMSRRGKSVA) directs the protein to the chloroplast. Mg(2+) is bound by residues Asp-377, Asp-381, and Asp-529. Residues 377 to 381 (DDMYD) carry the DDXXD motif motif.

Belongs to the terpene synthase family. Tpsd subfamily. Mg(2+) serves as cofactor. Mn(2+) is required as a cofactor.

The protein resides in the plastid. The protein localises to the chloroplast. The enzyme catalyses (2E)-geranyl diphosphate = (+)-car-3-ene + diphosphate. It catalyses the reaction (2E)-geranyl diphosphate = terpinolene + diphosphate. It participates in terpene metabolism; oleoresin biosynthesis. It functions in the pathway secondary metabolite biosynthesis; terpenoid biosynthesis. Its function is as follows. Monoterpene synthase (TPS) involved in the biosynthesis of monoterpene natural products included in conifer oleoresin secretions and volatile emissions; these compounds contribute to biotic and abiotic stress defense against herbivores and pathogens. Catalyzes the conversion of (2E)-geranyl diphosphate (GPP) to (+)-car-3-ene and, to a lower extent, to terpinolene. In Pinus contorta (Shore pine), this protein is (+)-3-carene synthase 1, chloroplastic.